Here is a 432-residue protein sequence, read N- to C-terminus: Interleukin-11 receptor subunit alpha-2 (432 aa).

The signal sequence occupies residues 1-23; the sequence is MSSSCSGLTRVLVAVATALVSSS. Over 24–372 the chain is Extracellular; it reads SPCPQAWGPP…DPLEQVAVLA (349 aa). An Ig-like C2-type domain is found at 27 to 110; the sequence is PQAWGPPGVQ…SGGMVTLKLG (84 aa). 3 disulfide bridges follow: Cys48-Cys94, Cys120-Cys130, and Cys170-Cys180. 2 consecutive Fibronectin type-III domains span residues 112–219 and 220–317; these read PPAR…LRPD and PPQG…TPST. Asn127 carries an N-linked (GlcNAc...) asparagine glycan. Residues 151-170 are disordered; sequence KTLPGAESQRESPSTGPWPC. A glycan (N-linked (GlcNAc...) asparagine) is linked at Asn194. The WSXWS motif signature appears at 304–308; it reads WSAWS. A helical membrane pass occupies residues 373–393; that stretch reads SLGIFSCLGLAVGALALGLWL. Residues 394 to 432 are Cytoplasmic-facing; that stretch reads RLRRSGKEGPQKPGLLAPMIPVEKLPGIPNLQRTPENFS.

The protein belongs to the type I cytokine receptor family. Type 3 subfamily. On ligand binding, forms a multimer complex with IL6ST/gp130. In terms of tissue distribution, expression restricted to testis, lymph node and thymus. Highest level in testis.

It localises to the membrane. Its function is as follows. Receptor for interleukin-11. The receptor systems for IL6, LIF, OSM, CNTF, IL11 and CT1 can utilize IL6ST for initiating signal transmission. The IL11/IL11RA/IL6ST complex may be involved in the control of proliferation and/or differentiation of skeletogenic progenitor or other mesenchymal cells. This is Interleukin-11 receptor subunit alpha-2 (Il11ra2) from Mus musculus (Mouse).